The chain runs to 147 residues: Large ribosomal subunit protein uL13 (147 aa).

The disordered stretch occupies residues 128–147; the sequence is DQHPHGAQQPQPFEITQVAQ.

The protein belongs to the universal ribosomal protein uL13 family. In terms of assembly, part of the 50S ribosomal subunit.

In terms of biological role, this protein is one of the early assembly proteins of the 50S ribosomal subunit, although it is not seen to bind rRNA by itself. It is important during the early stages of 50S assembly. This is Large ribosomal subunit protein uL13 from Streptomyces coelicolor (strain ATCC BAA-471 / A3(2) / M145).